A 193-amino-acid chain; its full sequence is Ancillary SecYEG translocon subunit (193 aa).

The Cytoplasmic segment spans residues 1–11; sequence MIKNSYINEKL. Residues 12–34 traverse the membrane as a helical segment; it reads NFYQKSFLTCMLLIVIVIVYFFS. Residues 35–193 are Extracellular-facing; sequence KNYLDKPKNS…IIQMKINNYN (159 aa).

It belongs to the YfgM family. As to quaternary structure, interacts with the Sec translocon. Forms a complex with PpiD.

It localises to the cell membrane. Functionally, may mediate protein transfer from the Sec translocon to the chaperone network via its extracellular C-terminal region. This is Ancillary SecYEG translocon subunit from Buchnera aphidicola subsp. Baizongia pistaciae (strain Bp).